Consider the following 505-residue polypeptide: Glucan endo-1,3-beta-glucosidase 2 (505 aa).

Positions 1–20 (MASLLHLLLLSLSLLVLASA) are cleaved as a signal peptide. An N-linked (GlcNAc...) asparagine glycan is attached at asparagine 97. Residue glutamate 125 is the Proton donor of the active site. Asparagine 180 and asparagine 262 each carry an N-linked (GlcNAc...) asparagine glycan. The active-site Nucleophile is the glutamate 272. Asparagine 304, asparagine 361, and asparagine 365 each carry an N-linked (GlcNAc...) asparagine glycan. Cysteine 369 and cysteine 432 are disulfide-bonded. Residues asparagine 461, asparagine 466, and asparagine 473 are each glycosylated (N-linked (GlcNAc...) asparagine). Serine 477 carries GPI-anchor amidated serine lipidation. Positions 478 to 505 (SGIRSDLYYSRGIWSILTVMILNVANIL) are cleaved as a propeptide — removed in mature form.

Belongs to the glycosyl hydrolase 17 family. Post-translationally, contains two additional disulfide bonds.

It is found in the cell membrane. The catalysed reaction is Hydrolysis of (1-&gt;3)-beta-D-glucosidic linkages in (1-&gt;3)-beta-D-glucans.. This chain is Glucan endo-1,3-beta-glucosidase 2, found in Arabidopsis thaliana (Mouse-ear cress).